The primary structure comprises 257 residues: Major prion protein (257 aa).

The N-terminal stretch at 1–24 is a signal peptide; it reads MVKSHIGSWLLVLFVATWSDIGFC. The segment at 25–234 is interaction with GRB2, ERI3 and SYN1; that stretch reads KKRPKPGGGW…ESEAYYQRGA (210 aa). Residues 27–114 form a disordered region; sequence RPKPGGGWNT…KPSKPKTNMK (88 aa). 5 repeat units span residues 54 to 62, 63 to 70, 71 to 78, 79 to 86, and 87 to 95. A 5 X 8 AA tandem repeats of P-H-G-G-G-W-G-Q region spans residues 54–95; it reads PQGGGGWGQPHGGGWGQPHGGGWGQPHGGGWGQPHGGGGWGQ. Over residues 55–101 the composition is skewed to gly residues; that stretch reads QGGGGWGQPHGGGWGQPHGGGWGQPHGGGWGQPHGGGGWGQGGGSHG. His64, Gly65, Gly66, His72, Gly73, Gly74, His80, Gly81, Gly82, His88, Gly90, and Gly91 together coordinate Cu(2+). A disulfide bridge links Cys183 with Cys218. 2 N-linked (GlcNAc...) asparagine glycosylation sites follow: Asn185 and Asn201. Residue Ala234 is the site of GPI-anchor amidated alanine attachment. Residues 235–257 constitute a propeptide, removed in mature form; sequence SAILFSPPPVILLISLLILLIVG.

This sequence belongs to the prion family. Monomer and homodimer. Has a tendency to aggregate into amyloid fibrils containing a cross-beta spine, formed by a steric zipper of superposed beta-strands. Soluble oligomers may represent an intermediate stage on the path to fibril formation. Copper binding may promote oligomerization. Interacts with GRB2, APP, ERI3/PRNPIP and SYN1. Mislocalized cytosolically exposed PrP interacts with MGRN1; this interaction alters MGRN1 subcellular location and causes lysosomal enlargement. Interacts with KIAA1191.

The protein resides in the cell membrane. The protein localises to the golgi apparatus. Its primary physiological function is unclear. Has cytoprotective activity against internal or environmental stresses. May play a role in neuronal development and synaptic plasticity. May be required for neuronal myelin sheath maintenance. May play a role in iron uptake and iron homeostasis. Soluble oligomers are toxic to cultured neuroblastoma cells and induce apoptosis (in vitro). Association with GPC1 (via its heparan sulfate chains) targets PRNP to lipid rafts. Also provides Cu(2+) or Zn(2+) for the ascorbate-mediated GPC1 deaminase degradation of its heparan sulfate side chains. In Mustela putorius furo (European domestic ferret), this protein is Major prion protein (PRNP).